The sequence spans 262 residues: Zinc import ATP-binding protein ZnuC (262 aa).

The region spanning 6 to 221 (IRLDKVAVTL…PAFVELFGKN (216 aa)) is the ABC transporter domain. 38 to 45 (GPNGAGKT) contributes to the ATP binding site.

Belongs to the ABC transporter superfamily. Zinc importer (TC 3.A.1.15.5) family. As to quaternary structure, the complex is composed of two ATP-binding proteins (ZnuC), two transmembrane proteins (ZnuB) and a solute-binding protein (ZnuA).

It is found in the cell inner membrane. It carries out the reaction Zn(2+)(out) + ATP(in) + H2O(in) = Zn(2+)(in) + ADP(in) + phosphate(in) + H(+)(in). In terms of biological role, part of the ABC transporter complex ZnuABC involved in zinc import. Responsible for energy coupling to the transport system. The protein is Zinc import ATP-binding protein ZnuC of Pseudomonas syringae pv. syringae (strain B728a).